The chain runs to 255 residues: Leucyl/phenylalanyl-tRNA--protein transferase (255 aa).

It belongs to the L/F-transferase family.

The protein resides in the cytoplasm. It carries out the reaction N-terminal L-lysyl-[protein] + L-leucyl-tRNA(Leu) = N-terminal L-leucyl-L-lysyl-[protein] + tRNA(Leu) + H(+). The catalysed reaction is N-terminal L-arginyl-[protein] + L-leucyl-tRNA(Leu) = N-terminal L-leucyl-L-arginyl-[protein] + tRNA(Leu) + H(+). It catalyses the reaction L-phenylalanyl-tRNA(Phe) + an N-terminal L-alpha-aminoacyl-[protein] = an N-terminal L-phenylalanyl-L-alpha-aminoacyl-[protein] + tRNA(Phe). In terms of biological role, functions in the N-end rule pathway of protein degradation where it conjugates Leu, Phe and, less efficiently, Met from aminoacyl-tRNAs to the N-termini of proteins containing an N-terminal arginine or lysine. The polypeptide is Leucyl/phenylalanyl-tRNA--protein transferase (Burkholderia pseudomallei (strain 1106a)).